We begin with the raw amino-acid sequence, 584 residues long: Aspartate--tRNA(Asp/Asn) ligase (584 aa).

Glu-177 contributes to the L-aspartate binding site. Residues 201 to 204 (QLFK) form an aspartate region. Arg-223 lines the L-aspartate pocket. Residues 223 to 225 (RDE) and Gln-232 contribute to the ATP site. His-447 is an L-aspartate binding site. Position 481 (Glu-481) interacts with ATP. L-aspartate is bound at residue Arg-488. ATP is bound at residue 533 to 536 (GLDR).

The protein belongs to the class-II aminoacyl-tRNA synthetase family. Type 1 subfamily. As to quaternary structure, homodimer.

The protein resides in the cytoplasm. It catalyses the reaction tRNA(Asx) + L-aspartate + ATP = L-aspartyl-tRNA(Asx) + AMP + diphosphate. Its function is as follows. Aspartyl-tRNA synthetase with relaxed tRNA specificity since it is able to aspartylate not only its cognate tRNA(Asp) but also tRNA(Asn). Reaction proceeds in two steps: L-aspartate is first activated by ATP to form Asp-AMP and then transferred to the acceptor end of tRNA(Asp/Asn). This Chlamydia caviae (strain ATCC VR-813 / DSM 19441 / 03DC25 / GPIC) (Chlamydophila caviae) protein is Aspartate--tRNA(Asp/Asn) ligase.